The sequence spans 276 residues: Large ribosomal subunit protein uL2c (276 aa).

2 disordered regions span residues 1–51 (MAIR…GIIT) and 224–276 (VVMN…RRRK). Polar residues-rich tracts occupy residues 7–18 (RTYTPSTRNRPI) and 27–37 (SNPQKKLTSGQ).

The protein belongs to the universal ribosomal protein uL2 family. In terms of assembly, part of the 50S ribosomal subunit.

Its subcellular location is the plastid. It is found in the chloroplast. The chain is Large ribosomal subunit protein uL2c (rpl2) from Cycas taitungensis (Prince sago).